Consider the following 297-residue polypeptide: Bifunctional protein FolD (297 aa).

NADP(+) contacts are provided by residues 168 to 170, Thr-197, and Val-238; that span reads GRS.

Belongs to the tetrahydrofolate dehydrogenase/cyclohydrolase family. Homodimer.

The catalysed reaction is (6R)-5,10-methylene-5,6,7,8-tetrahydrofolate + NADP(+) = (6R)-5,10-methenyltetrahydrofolate + NADPH. It carries out the reaction (6R)-5,10-methenyltetrahydrofolate + H2O = (6R)-10-formyltetrahydrofolate + H(+). It participates in one-carbon metabolism; tetrahydrofolate interconversion. In terms of biological role, catalyzes the oxidation of 5,10-methylenetetrahydrofolate to 5,10-methenyltetrahydrofolate and then the hydrolysis of 5,10-methenyltetrahydrofolate to 10-formyltetrahydrofolate. This chain is Bifunctional protein FolD, found in Lawsonia intracellularis (strain PHE/MN1-00).